Consider the following 497-residue polypeptide: Membrane-bound lytic murein transglycosylase F (497 aa).

An N-terminal signal peptide occupies residues 1–29 (MFFRPDFRPRCAKWLIATGLFLMLGACVE). A non-LT domain region spans residues 30–267 (KPTTLERVKE…RLKDRYYGHV (238 aa)). Residues 268–497 (DVLGYVGAYT…PASSPEKPAL (230 aa)) are LT domain. Glutamate 314 is an active-site residue. The segment at 464–497 (VADGNLHVPGVDKTQPPAPTAPVVPASSPEKPAL) is disordered. Residues 486 to 497 (VVPASSPEKPAL) are compositionally biased toward low complexity.

This sequence in the N-terminal section; belongs to the bacterial solute-binding protein 3 family. It in the C-terminal section; belongs to the transglycosylase Slt family.

It localises to the cell outer membrane. It catalyses the reaction Exolytic cleavage of the (1-&gt;4)-beta-glycosidic linkage between N-acetylmuramic acid (MurNAc) and N-acetylglucosamine (GlcNAc) residues in peptidoglycan, from either the reducing or the non-reducing ends of the peptidoglycan chains, with concomitant formation of a 1,6-anhydrobond in the MurNAc residue.. Functionally, murein-degrading enzyme that degrades murein glycan strands and insoluble, high-molecular weight murein sacculi, with the concomitant formation of a 1,6-anhydromuramoyl product. Lytic transglycosylases (LTs) play an integral role in the metabolism of the peptidoglycan (PG) sacculus. Their lytic action creates space within the PG sacculus to allow for its expansion as well as for the insertion of various structures such as secretion systems and flagella. The polypeptide is Membrane-bound lytic murein transglycosylase F (Pseudomonas syringae pv. tomato (strain ATCC BAA-871 / DC3000)).